The sequence spans 257 residues: Imidazole glycerol phosphate synthase subunit HisF (257 aa).

Catalysis depends on residues aspartate 12 and aspartate 131.

The protein belongs to the HisA/HisF family. In terms of assembly, heterodimer of HisH and HisF.

It is found in the cytoplasm. It catalyses the reaction 5-[(5-phospho-1-deoxy-D-ribulos-1-ylimino)methylamino]-1-(5-phospho-beta-D-ribosyl)imidazole-4-carboxamide + L-glutamine = D-erythro-1-(imidazol-4-yl)glycerol 3-phosphate + 5-amino-1-(5-phospho-beta-D-ribosyl)imidazole-4-carboxamide + L-glutamate + H(+). It functions in the pathway amino-acid biosynthesis; L-histidine biosynthesis; L-histidine from 5-phospho-alpha-D-ribose 1-diphosphate: step 5/9. Functionally, IGPS catalyzes the conversion of PRFAR and glutamine to IGP, AICAR and glutamate. The HisF subunit catalyzes the cyclization activity that produces IGP and AICAR from PRFAR using the ammonia provided by the HisH subunit. In Mycobacteroides abscessus (strain ATCC 19977 / DSM 44196 / CCUG 20993 / CIP 104536 / JCM 13569 / NCTC 13031 / TMC 1543 / L948) (Mycobacterium abscessus), this protein is Imidazole glycerol phosphate synthase subunit HisF.